We begin with the raw amino-acid sequence, 471 residues long: Putative multidrug resistance protein MdtD (471 aa).

13 helical membrane-spanning segments follow: residues 12 to 32 (LWIV…VNTA), 49 to 69 (MIIV…GWLA), 77 to 97 (IFFT…QAST), 106 to 126 (VLQG…VMKI), 138 to 158 (FVTL…GVLV), 165 to 185 (WIFL…LCLM), 195 to 215 (FDLS…LALD), 220 to 240 (LGIS…ALLL), 263 to 283 (FSLG…LPFM), 286 to 306 (VFLQ…MIPM), 342 to 362 (LLFM…VLFL), 393 to 413 (LLSM…GLLL), and 431 to 451 (VFLY…LIFS).

It belongs to the major facilitator superfamily. TCR/Tet family.

Its subcellular location is the cell inner membrane. The sequence is that of Putative multidrug resistance protein MdtD from Klebsiella pneumoniae (strain 342).